The following is a 546-amino-acid chain: Interleukin-20 receptor subunit alpha (546 aa).

Positions 1–32 are cleaved as a signal peptide; sequence MHTPGTPAPGHPDPPPLLLLTLLLLLAASGRA. Topologically, residues 33-253 are extracellular; sequence VPCVFCGLPK…EVQTSAWKAK (221 aa). Fibronectin type-III domains are found at residues 42 to 138 and 139 to 245; these read KPTN…FLET and QVSP…TLEV. N-linked (GlcNAc...) asparagine glycosylation is found at Asn45, Asn86, Asn94, Asn185, and Asn203. Cys90 and Cys98 are joined by a disulfide. The cysteines at positions 218 and 239 are disulfide-linked. A helical membrane pass occupies residues 254–274; that stretch reads VIFWYVFLTSVIVFLFSAIGY. Over 275–546 the chain is Cytoplasmic; the sequence is LVYRYIHVGK…EWGLHVQMES (272 aa).

It belongs to the type II cytokine receptor family. In terms of assembly, heterodimer with IL20RB and heterodimer with IL10RB.

The protein resides in the membrane. The IL20RA/IL20RB dimer is a receptor for IL19, IL20 and IL24. The IL20RA/IL10RB dimer is a receptor for IL26. This Mus musculus (Mouse) protein is Interleukin-20 receptor subunit alpha (Il20ra).